The following is a 365-amino-acid chain: tRNA 2-selenouridine synthase (365 aa).

The region spanning 15-138 is the Rhodanese domain; that stretch reads FIAGQPLIDL…MRQYLIGVIE (124 aa). Residue Cys98 is the S-selanylcysteine intermediate of the active site.

This sequence belongs to the SelU family. As to quaternary structure, monomer.

The enzyme catalyses 5-methylaminomethyl-2-thiouridine(34) in tRNA + selenophosphate + (2E)-geranyl diphosphate + H2O + H(+) = 5-methylaminomethyl-2-selenouridine(34) in tRNA + (2E)-thiogeraniol + phosphate + diphosphate. The catalysed reaction is 5-methylaminomethyl-2-thiouridine(34) in tRNA + (2E)-geranyl diphosphate = 5-methylaminomethyl-S-(2E)-geranyl-thiouridine(34) in tRNA + diphosphate. It catalyses the reaction 5-methylaminomethyl-S-(2E)-geranyl-thiouridine(34) in tRNA + selenophosphate + H(+) = 5-methylaminomethyl-2-(Se-phospho)selenouridine(34) in tRNA + (2E)-thiogeraniol. It carries out the reaction 5-methylaminomethyl-2-(Se-phospho)selenouridine(34) in tRNA + H2O = 5-methylaminomethyl-2-selenouridine(34) in tRNA + phosphate. Involved in the post-transcriptional modification of the uridine at the wobble position (U34) of tRNA(Lys), tRNA(Glu) and tRNA(Gln). Catalyzes the conversion of 2-thiouridine (S2U-RNA) to 2-selenouridine (Se2U-RNA). Acts in a two-step process involving geranylation of 2-thiouridine (S2U) to S-geranyl-2-thiouridine (geS2U) and subsequent selenation of the latter derivative to 2-selenouridine (Se2U) in the tRNA chain. The protein is tRNA 2-selenouridine synthase of Shewanella sp. (strain ANA-3).